The sequence spans 255 residues: Small ribosomal subunit protein uS2 (255 aa).

The segment at 233-255 (DFVAEEAASEESLEELAEIVEGK) is disordered.

Belongs to the universal ribosomal protein uS2 family.

This is Small ribosomal subunit protein uS2 from Lactococcus lactis subsp. cremoris (strain SK11).